The primary structure comprises 373 residues: Gametogenetin-binding protein 1 (373 aa).

Disordered stretches follow at residues 26-113 and 237-268; these read VGSK…GSQT and KAQR…AVDE. Positions 36–49 are enriched in polar residues; sequence NRPLNRSQPSSSPE. The required for induction of mitochondrial fragmentation stretch occupies residues 226–373; sequence LYKQLQKSAM…DEMGNWPPPE (148 aa). Over residues 254 to 263 the composition is skewed to basic and acidic residues; it reads SPTEERGERE. An interaction with GGN region spans residues 301-373; sequence KTFRSTDTVG…DEMGNWPPPE (73 aa).

Interacts with CCDC159. Interacts with GGN.

It is found in the cytoplasm. Its subcellular location is the membrane. The protein localises to the golgi apparatus. It localises to the mitochondrion intermembrane space. Induces mitochondrial fragmentation, possibly by promoting DNM1L-dependent fission and may play a role in mitochondrial morphogenesis during spermatogenesis. This is Gametogenetin-binding protein 1 (Ggnbp1) from Rattus norvegicus (Rat).